A 1724-amino-acid chain; its full sequence is Protein mono-ADP-ribosyltransferase PARP4 (1724 aa).

Residues 1–94 (MVMGIFANCI…RLLDVKNYDP (94 aa)) form the BRCT domain. The short motif at 19 to 25 (PQQQKKK) is the Nuclear localization signal element. Positions 97-123 (PLDITPPPDQKASSSEVKTEGLCPDSA) are disordered. Residues Thr101 and Thr333 each carry the phosphothreonine modification. One can recognise a PARP alpha-helical domain in the interval 242-370 (SEQLQALLLE…ETNLSKPNPP (129 aa)). Residues 369–573 (PPSLAKYRAL…FSMPGDQIKD (205 aa)) form the PARP catalytic domain. The VIT domain occupies 607 to 735 (SSTKAGLQDA…KVLIKITYIT (129 aa)). Positions 876 to 1046 (EVIICLDCSS…KQIEDQMTRL (171 aa)) constitute a VWFA domain. Ser1236 carries the phosphoserine modification. The short motif at 1237-1249 (KRKHRKIPFSKRK) is the Nuclear localization signal element. Position 1335 is a phosphoserine (Ser1335). Residues 1408–1452 (SAQSAPLQHPGGFTTRPSAGTFPELDSPQLHFSLPTDPDPIRGFG) are disordered. An Asymmetric dimethylarginine modification is found at Arg1476. Ser1504 bears the Phosphoserine mark. The interval 1562-1724 (VCIQHWQDAV…LHRVLHYSQG (163 aa)) is interaction with the major vault protein.

Belongs to the ARTD/PARP family. Component of the vault ribonucleoprotein particle, at least composed of MVP, PARP4 and one or more vault RNAs (vRNAs). Interacts with TEP1. As to expression, widely expressed; the highest levels are in the kidney; also detected in heart, placenta, lung, liver, skeletal muscle, spleen, leukocytes and pancreas.

The protein resides in the cytoplasm. Its subcellular location is the nucleus. It is found in the cytoskeleton. It localises to the spindle. The catalysed reaction is L-aspartyl-[protein] + NAD(+) = 4-O-(ADP-D-ribosyl)-L-aspartyl-[protein] + nicotinamide. The enzyme catalyses L-glutamyl-[protein] + NAD(+) = 5-O-(ADP-D-ribosyl)-L-glutamyl-[protein] + nicotinamide. Mono-ADP-ribosyltransferase that mediates mono-ADP-ribosylation of target proteins. This is Protein mono-ADP-ribosyltransferase PARP4 from Homo sapiens (Human).